The primary structure comprises 385 residues: MERNVTLDFVRGVAILGILLLNISAFGLPKAAYLNPAWYGAITPRDAWTWAFLDLIGQVKFLTLFALLFGAGLQMLLPRGRRWIQSRLTLLVLLGFIHGLLFWDGDILLAYGLVGLICWRLVRDAPSVKSLFNTGVMLYLVGLGVLLLLGLISDSQTSRAWTPDASAILYEKYWKLHGGVEAISNRADGVGNSLLALGAQYGWQLAGMMLIGAALMRSGWLKGQFSLRHYRRTGFVLVAIGVTINLPAIALQWQLDWAYRWCAFLLQMPRELSAPFQAIGYASLFYGFWPQLSRFKLVLAIACVGRMALTNYLLQTLICTTLFYHLGLFMHFDRLELLAFVIPVWLANILFSVIWLRYFRQGPVEWLWRQLTLRAAGPAISKTSR.

Transmembrane regions (helical) follow at residues 12–32 (GVAILGILLLNISAFGLPKAA), 50–70 (WAFLDLIGQVKFLTLFALLFG), 90–110 (LLVLLGFIHGLLFWDGDILLA), 132–152 (FNTGVMLYLVGLGVLLLLGLI), 195–215 (LALGAQYGWQLAGMMLIGAAL), 233–253 (TGFVLVAIGVTINLPAIALQW), 272–292 (LSAPFQAIGYASLFYGFWPQL), 312–332 (YLLQTLICTTLFYHLGLFMHF), and 335–355 (LELLAFVIPVWLANILFSVIW).

To B.subtilis YxaH and YrkO.

Its subcellular location is the cell membrane. Involved in transport. This is an uncharacterized protein from Escherichia coli (strain K12).